Here is a 242-residue protein sequence, read N- to C-terminus: Ribonuclease PH (242 aa).

Phosphate-binding positions include Arg86 and 124–126 (GTR).

It belongs to the RNase PH family. As to quaternary structure, homohexameric ring arranged as a trimer of dimers.

The enzyme catalyses tRNA(n+1) + phosphate = tRNA(n) + a ribonucleoside 5'-diphosphate. In terms of biological role, phosphorolytic 3'-5' exoribonuclease that plays an important role in tRNA 3'-end maturation. Removes nucleotide residues following the 3'-CCA terminus of tRNAs; can also add nucleotides to the ends of RNA molecules by using nucleoside diphosphates as substrates, but this may not be physiologically important. Probably plays a role in initiation of 16S rRNA degradation (leading to ribosome degradation) during starvation. This chain is Ribonuclease PH, found in Caulobacter sp. (strain K31).